The following is a 226-amino-acid chain: UPF0758 protein CHY_0341 (226 aa).

The region spanning 104-226 is the MPN domain; the sequence is NFLNPDDVYN…YISMKAERLF (123 aa). Residues histidine 175, histidine 177, and aspartate 188 each contribute to the Zn(2+) site. Positions 175–188 match the JAMM motif motif; the sequence is HNHPSGDPTPSKED.

It belongs to the UPF0758 family.

This chain is UPF0758 protein CHY_0341, found in Carboxydothermus hydrogenoformans (strain ATCC BAA-161 / DSM 6008 / Z-2901).